A 417-amino-acid chain; its full sequence is Ribonucleoside-diphosphate reductase small chain (417 aa).

3 residues coordinate Fe cation: aspartate 168, glutamate 199, and histidine 202. Residue tyrosine 206 is part of the active site. The Fe cation site is built by glutamate 261, glutamate 297, and histidine 300.

It belongs to the ribonucleoside diphosphate reductase small chain family. As to quaternary structure, heterotetramer composed of a homodimer of the large subunit (R1) and a homodimer of the small subunit (R2). Larger multisubunit protein complex are also active, composed of (R1)n(R2)n. Requires Fe cation as cofactor.

The catalysed reaction is a 2'-deoxyribonucleoside 5'-diphosphate + [thioredoxin]-disulfide + H2O = a ribonucleoside 5'-diphosphate + [thioredoxin]-dithiol. In terms of biological role, ribonucleoside-diphosphate reductase holoenzyme provides the precursors necessary for viral DNA synthesis. Allows virus growth in non-dividing cells. Catalyzes the biosynthesis of deoxyribonucleotides from the corresponding ribonucleotides. This is Ribonucleoside-diphosphate reductase small chain (RNR2) from Acanthamoeba polyphaga mimivirus (APMV).